We begin with the raw amino-acid sequence, 365 residues long: 3-dehydroquinate synthase (365 aa).

NAD(+) contacts are provided by residues 75–80 (DAESGK), 109–113 (GAATD), 133–134 (TT), Lys146, and Lys155. The Zn(2+) site is built by Glu188, His253, and His269.

This sequence belongs to the sugar phosphate cyclases superfamily. Dehydroquinate synthase family. It depends on NAD(+) as a cofactor. The cofactor is Co(2+). Requires Zn(2+) as cofactor.

It is found in the cytoplasm. The enzyme catalyses 7-phospho-2-dehydro-3-deoxy-D-arabino-heptonate = 3-dehydroquinate + phosphate. Its pathway is metabolic intermediate biosynthesis; chorismate biosynthesis; chorismate from D-erythrose 4-phosphate and phosphoenolpyruvate: step 2/7. In terms of biological role, catalyzes the conversion of 3-deoxy-D-arabino-heptulosonate 7-phosphate (DAHP) to dehydroquinate (DHQ). The sequence is that of 3-dehydroquinate synthase from Corynebacterium efficiens (strain DSM 44549 / YS-314 / AJ 12310 / JCM 11189 / NBRC 100395).